The chain runs to 109 residues: FK506-binding protein (109 aa).

The region spanning 20-108 (GKEITVHYTG…IFEVELLKVY (89 aa)) is the PPIase FKBP-type domain.

This sequence belongs to the FKBP-type PPIase family.

It carries out the reaction [protein]-peptidylproline (omega=180) = [protein]-peptidylproline (omega=0). PPIases accelerate the folding of proteins. This is FK506-binding protein (fbp) from Neisseria meningitidis serogroup C.